Consider the following 286-residue polypeptide: ATP synthase gamma chain (286 aa).

It belongs to the ATPase gamma chain family. As to quaternary structure, F-type ATPases have 2 components, CF(1) - the catalytic core - and CF(0) - the membrane proton channel. CF(1) has five subunits: alpha(3), beta(3), gamma(1), delta(1), epsilon(1). CF(0) has three main subunits: a, b and c.

The protein localises to the cell membrane. In terms of biological role, produces ATP from ADP in the presence of a proton gradient across the membrane. The gamma chain is believed to be important in regulating ATPase activity and the flow of protons through the CF(0) complex. The protein is ATP synthase gamma chain of Malacoplasma penetrans (strain HF-2) (Mycoplasma penetrans).